A 433-amino-acid polypeptide reads, in one-letter code: Probable dipeptidase (433 aa).

Cys20 is a catalytic residue.

The protein belongs to the peptidase C69 family.

The enzyme catalyses an L-aminoacyl-L-amino acid + H2O = 2 an L-alpha-amino acid. This chain is Probable dipeptidase (pipD), found in Salmonella dublin.